The following is a 130-amino-acid chain: Small ribosomal subunit protein uS11 (130 aa).

Belongs to the universal ribosomal protein uS11 family. As to quaternary structure, part of the 30S ribosomal subunit. Interacts with proteins S7 and S18. Binds to IF-3.

Located on the platform of the 30S subunit, it bridges several disparate RNA helices of the 16S rRNA. Forms part of the Shine-Dalgarno cleft in the 70S ribosome. The protein is Small ribosomal subunit protein uS11 of Xylella fastidiosa (strain M12).